Consider the following 509-residue polypeptide: tRNA-2-methylthio-N(6)-dimethylallyladenosine synthase (509 aa).

Polar residues predominate over residues 1-15 (MNEQQRLASQQVNSS). The disordered stretch occupies residues 1–23 (MNEQQRLASQQVNSSTKKEEKDY). Residues 66 to 184 (RKFYIRTYGC…LPYILKDAMF (119 aa)) form the MTTase N-terminal domain. 6 residues coordinate [4Fe-4S] cluster: C75, C111, C145, C221, C225, and C228. A Radical SAM core domain is found at 207–437 (RRGDIKAWVN…NALVNKLAIE (231 aa)). The region spanning 440-503 (DRYKGQIVEV…TWSLNGELVE (64 aa)) is the TRAM domain.

This sequence belongs to the methylthiotransferase family. MiaB subfamily. In terms of assembly, monomer. [4Fe-4S] cluster is required as a cofactor.

Its subcellular location is the cytoplasm. It catalyses the reaction N(6)-dimethylallyladenosine(37) in tRNA + (sulfur carrier)-SH + AH2 + 2 S-adenosyl-L-methionine = 2-methylsulfanyl-N(6)-dimethylallyladenosine(37) in tRNA + (sulfur carrier)-H + 5'-deoxyadenosine + L-methionine + A + S-adenosyl-L-homocysteine + 2 H(+). In terms of biological role, catalyzes the methylthiolation of N6-(dimethylallyl)adenosine (i(6)A), leading to the formation of 2-methylthio-N6-(dimethylallyl)adenosine (ms(2)i(6)A) at position 37 in tRNAs that read codons beginning with uridine. This Bacillus anthracis protein is tRNA-2-methylthio-N(6)-dimethylallyladenosine synthase.